Consider the following 275-residue polypeptide: Tumor necrosis factor receptor superfamily member 14 (275 aa).

An N-terminal signal peptide occupies residues 1–38; it reads MEPLPGWGSAPWSQAPTDNTFRLVPCVFLLNLLQRISA. TNFR-Cys repeat units lie at residues 41-75, 77-119, and 120-162; these read SCRQ…GTVC, PCPP…DTVC, and RCIP…DTVC. Disulfide bonds link C42–C53, C54–C67, C57–C75, C78–C93, C96–C111, C99–C119, C121–C138, and C144–C162. N-linked (GlcNAc...) asparagine glycans are attached at residues N184 and N197. A helical membrane pass occupies residues 211–231; it reads VVSILLPLVIVGAGIAGFLIC.

The protein belongs to the tumor necrosis factor receptor superfamily. Interacts with TRAF2, TRAF3 and TRAF5. Interacts (via CRD1/TNFR-Cys 1) with CD160; this interaction is direct. Interacts (via CRD1/TNFR-Cys 1) with BTLA; this interaction is direct. In terms of processing, N-glycosylated. Expressed at mucosal sites including colon and pulmonary epithelial cells. Expressed in naive T cells.

It is found in the cell membrane. Its function is as follows. Receptor for four distinct ligands: The TNF superfamily members TNFSF14/LIGHT and homotrimeric LTA/lymphotoxin-alpha and the immunoglobulin superfamily members BTLA and CD160, altogether defining a complex stimulatory and inhibitory signaling network. Signals via the TRAF2-TRAF3 E3 ligase pathway to promote immune cell survival and differentiation. Participates in bidirectional cell-cell contact signaling between antigen presenting cells and lymphocytes. In response to ligation of TNFSF14/LIGHT, delivers costimulatory signals to T cells, promoting cell proliferation and effector functions. Interacts with CD160 on NK cells, enhancing IFNG production and anti-tumor immune response. In the context of bacterial infection, acts as a signaling receptor on epithelial cells for CD160 from intraepithelial lymphocytes, triggering the production of antimicrobial proteins and pro-inflammatory cytokines. Upon binding to CD160 on activated CD4+ T cells, down-regulates CD28 costimulatory signaling, restricting memory and alloantigen-specific immune response. May interact in cis (on the same cell) or in trans (on other cells) with BTLA. In cis interactions, appears to play an immune regulatory role inhibiting in trans interactions in naive T cells to maintain a resting state. In trans interactions, can predominate during adaptive immune response to provide survival signals to effector T cells. The protein is Tumor necrosis factor receptor superfamily member 14 of Mus musculus (Mouse).